The sequence spans 837 residues: V-type proton ATPase 116 kDa subunit a 1 (837 aa).

Over 1–388 (MGELFRSEEM…DAYGIGTYRE (388 aa)) the chain is Cytoplasmic. Phosphothreonine is present on residues threonine 250 and threonine 360. Tyrosine 364 is subject to Phosphotyrosine. A helical transmembrane segment spans residues 389 to 407 (INPAPYTIITFPFLFAVMF). Topologically, residues 408–409 (GD) are vacuolar. Residues 410-426 (FGHGILMTLFAVWMVLR) traverse the membrane as a helical segment. The Cytoplasmic segment spans residues 427-441 (ESRILSQKNENEMFS). A helical membrane pass occupies residues 442–471 (TVFSGRYIILLMGVFSMYTGLIYNDCFSKS). Topologically, residues 472 to 534 (LNIFGSSWSV…ATNKLTFLNS (63 aa)) are vacuolar. Asparagine 488 carries N-linked (GalNAc...) asparagine glycosylation. The helical transmembrane segment at 535–554 (FKMKMSVILGIIHMLFGVSL) threads the bilayer. Residues 555 to 572 (SLFNHIYFKKPLNIYFGF) are Cytoplasmic-facing. Residues 573–593 (IPEIIFMTSLFGYLVILIFYK) form a helical membrane-spanning segment. The Vacuolar segment spans residues 594–638 (WTAYDAHTSENAPSLLIHFINMFLFSYPESGYSMLYSGQKGIQCF). A helical membrane pass occupies residues 639-658 (LVVVALLCVPWMLLFKPLVL). At 659 to 724 (RRQYLRRKHL…DTMVHQAIHT (66 aa)) the chain is on the cytoplasmic side. A helical membrane pass occupies residues 725–749 (IEYCLGCISNTASYLRLWALSLAHA). At 750–770 (QLSEVLWTMVIHIGLSVKSLA) the chain is on the vacuolar side. The chain crosses the membrane as a helical span at residues 771-809 (GGLVLFFFFTAFATLTVAILLIMEGLSAFLHALRLHWVE). Residues 810-837 (FQNKFYSGTGFKFLPFSFEHIREGKFEE) lie on the Cytoplasmic side of the membrane.

This sequence belongs to the V-ATPase 116 kDa subunit family. V-ATPase is a heteromultimeric enzyme made up of two complexes: the ATP-hydrolytic V1 complex and the proton translocation V0 complex. The V1 complex consists of three catalytic AB heterodimers that form a heterohexamer, three peripheral stalks each consisting of EG heterodimers, one central rotor including subunits D and F, and the regulatory subunits C and H. The proton translocation complex V0 consists of the proton transport subunit a, a ring of proteolipid subunits c9c'', rotary subunit d, subunits e and f, and the accessory subunits ATP6AP1/Ac45 and ATP6AP2/PRR. Interacts with SPAAR.

It is found in the cytoplasmic vesicle. The protein resides in the clathrin-coated vesicle membrane. The protein localises to the secretory vesicle. Its subcellular location is the synaptic vesicle membrane. It localises to the melanosome. In terms of biological role, subunit of the V0 complex of vacuolar(H+)-ATPase (V-ATPase), a multisubunit enzyme composed of a peripheral complex (V1) that hydrolyzes ATP and a membrane integral complex (V0) that transports protons across cellular membranes. V-ATPase is responsible for the acidification of various organelles, such as lysosomes, endosomes, the trans-Golgi network, and secretory granules, including synaptic vesicles. In certain cell types, can be exported to the plasma membrane, where it is involved in the acidification of the extracellular environment. Required for assembly and activity of the vacuolar ATPase. Through its action on compartment acidification, plays an essential role in neuronal development in terms of integrity and connectivity of neurons. This chain is V-type proton ATPase 116 kDa subunit a 1 (ATP6V0A1), found in Homo sapiens (Human).